The following is a 381-amino-acid chain: E3 ubiquitin-protein ligase RNF13 (381 aa).

Residues 1-34 (MLLSIGMLMLSATQVYTILTVQLFAFLNLLPVEA) form the signal peptide. The Lumenal portion of the chain corresponds to 35–182 (DILAYNFENA…VPELSLPLEY (148 aa)). The PA domain maps to 64-160 (LKGFLINSKP…GESSANSLKD (97 aa)). Residue Asn-88 is glycosylated (N-linked (GlcNAc...) asparagine). The chain crosses the membrane as a helical span at residues 183-203 (YLIPFLIIVGICLILIVIFMI). The Cytoplasmic portion of the chain corresponds to 204–381 (TKFVQDRHRN…EQDYNIANTV (178 aa)). The RING-type; atypical zinc-finger motif lies at 240-282 (CAICLEEYEDGDKLRILPCSHAYHCKCVDPWLTKTKKTCPVCK). The interval 285-381 (VVPSQGDSDS…EQDYNIANTV (97 aa)) is disordered. Residues 317–328 (SARTQSFGSLSE) show a composition bias toward polar residues. A compositionally biased stretch (acidic residues) spans 339 to 357 (SDYEDDDNEETDSSDADNE). Positions 365 to 381 (VQLQPNGEQDYNIANTV) are enriched in polar residues.

Interacts with ERN1. Autoubiquitinated. In terms of processing, N-glycosylated and also modified with chondroitin sulfate. In terms of tissue distribution, expressed in the brain, heart, kidney, liver and spleen. Higher expression in adult tissues compared to the embryonic counterparts.

It is found in the endoplasmic reticulum membrane. The protein resides in the late endosome membrane. It localises to the lysosome membrane. Its subcellular location is the nucleus inner membrane. It carries out the reaction S-ubiquitinyl-[E2 ubiquitin-conjugating enzyme]-L-cysteine + [acceptor protein]-L-lysine = [E2 ubiquitin-conjugating enzyme]-L-cysteine + N(6)-ubiquitinyl-[acceptor protein]-L-lysine.. The protein operates within protein modification; protein ubiquitination. E3 ubiquitin-protein ligase that regulates cell proliferation. Involved in apoptosis regulation. Mediates ER stress-induced activation of JNK signaling pathway and apoptosis by promoting ERN1 activation and splicing of XBP1 mRNA. Also involved in protein trafficking and localization. The polypeptide is E3 ubiquitin-protein ligase RNF13 (Rnf13) (Mus musculus (Mouse)).